A 273-amino-acid polypeptide reads, in one-letter code: 4-hydroxy-tetrahydrodipicolinate reductase (273 aa).

NAD(+)-binding positions include 12–17 (GAGGRM) and Glu38. NADP(+) is bound at residue Arg39. Residues 102-104 (GTT) and 126-129 (AANF) each bind NAD(+). The Proton donor/acceptor role is filled by His159. His160 is a binding site for (S)-2,3,4,5-tetrahydrodipicolinate. The active-site Proton donor is Lys163. 169 to 170 (GT) is a (S)-2,3,4,5-tetrahydrodipicolinate binding site.

The protein belongs to the DapB family. In terms of assembly, homotetramer.

The protein resides in the cytoplasm. It catalyses the reaction (S)-2,3,4,5-tetrahydrodipicolinate + NAD(+) + H2O = (2S,4S)-4-hydroxy-2,3,4,5-tetrahydrodipicolinate + NADH + H(+). It carries out the reaction (S)-2,3,4,5-tetrahydrodipicolinate + NADP(+) + H2O = (2S,4S)-4-hydroxy-2,3,4,5-tetrahydrodipicolinate + NADPH + H(+). Its pathway is amino-acid biosynthesis; L-lysine biosynthesis via DAP pathway; (S)-tetrahydrodipicolinate from L-aspartate: step 4/4. Catalyzes the conversion of 4-hydroxy-tetrahydrodipicolinate (HTPA) to tetrahydrodipicolinate. This chain is 4-hydroxy-tetrahydrodipicolinate reductase, found in Yersinia pseudotuberculosis serotype O:1b (strain IP 31758).